Reading from the N-terminus, the 353-residue chain is Cytochrome c biogenesis protein CcsA (353 aa).

8 consecutive transmembrane segments (helical) span residues 15–35 (FAILFLTMLVYWGGAAFPNLP), 37–57 (LAALGTAGMAIANLCMATLLG), 68–88 (LSNLYESLFFLTWGITTVHLI), 97–117 (LVGVVTAPVAMLIAAFATMTL), 142–162 (VMMLSYSALMVGALLAIAFLI), 261–281 (IIGLGFPLLTIGIIAGGVWAN), 288–308 (WSWDPKETWALITWLVFAAYL), and 322–342 (AILAATGFVVVWICYLGVNLL).

The protein belongs to the CcmF/CycK/Ccl1/NrfE/CcsA family. As to quaternary structure, may interact with ccs1.

The protein localises to the cellular thylakoid membrane. Required during biogenesis of c-type cytochromes (cytochrome c6 and cytochrome f) at the step of heme attachment. This chain is Cytochrome c biogenesis protein CcsA, found in Nostoc punctiforme (strain ATCC 29133 / PCC 73102).